The chain runs to 75 residues: UPF0352 protein VV1_3121 (75 aa).

This sequence belongs to the UPF0352 family.

The polypeptide is UPF0352 protein VV1_3121 (Vibrio vulnificus (strain CMCP6)).